The primary structure comprises 391 residues: uncharacterized protein (391 aa).

The N-terminal stretch at 1–20 is a signal peptide; the sequence is MRKLFLLSILMIGVIVAFAG. The S-archaeol cysteine moiety is linked to residue cysteine 21. Residues 104-377 form the Fe/B12 periplasmic-binding domain; it reads RIVTDFYCPI…DFAKMIHPEL (274 aa).

It localises to the cell membrane. This is an uncharacterized protein from Methanocaldococcus jannaschii (strain ATCC 43067 / DSM 2661 / JAL-1 / JCM 10045 / NBRC 100440) (Methanococcus jannaschii).